The sequence spans 1104 residues: General transcription factor II-I repeat domain-containing protein 1 (1104 aa).

Glycyl lysine isopeptide (Lys-Gly) (interchain with G-Cter in SUMO2) cross-links involve residues K27, K184, K212, K225, K238, K271, K337, K436, K439, and K443. The GTF2I-like 1 repeat unit spans residues 119-213; the sequence is LEQCSDVYLL…PDDGGQDTKA (95 aa). Residues 342 to 436 form a GTF2I-like 2 repeat; sequence IKEMEDINTL…FDERIFTGNK (95 aa). A Phosphoserine modification is found at S448. Residues 509–559 are disordered; it reads SDPSPTSEEMTDSLPGHLPSEDSGYGMEMPADKGPSEEPWSEERPAEESPG. Residues 538-555 show a composition bias toward basic and acidic residues; sequence PADKGPSEEPWSEERPAE. Residues 556–650 form a GTF2I-like 3 repeat; the sequence is ESPGDVIRPL…ELLTDGVKEP (95 aa). Residues K567, K579, K588, K622, K638, K669, K709, K717, K757, K759, and K772 each participate in a glycyl lysine isopeptide (Lys-Gly) (interchain with G-Cter in SUMO2) cross-link. The GTF2I-like 4 repeat unit spans residues 681-775; sequence LSRIDIANTL…FQGLIPKPET (95 aa). The disordered stretch occupies residues 783-802; it reads EAGKTTRPRRLQQDTWQPDE. A GTF2I-like 5 repeat occupies 805–899; the sequence is ANRLGEKVIL…LQPFAEVCND (95 aa). Glycyl lysine isopeptide (Lys-Gly) (interchain with G-Cter in SUMO2) cross-links involve residues K841 and K901. The GTF2I-like 6 repeat unit spans residues 908–1002; it reads SNKLGKKVIL…LQPFGDVCNN (95 aa). 2 disordered regions span residues 1001 to 1044 and 1058 to 1104; these read NNAK…VAST and LHPN…LPTR. The Nuclear localization signal motif lies at 1012 to 1019; sequence PKRKRKRV. Over residues 1021–1043 the composition is skewed to low complexity; sequence EGNSVSSSSSSSSSSSNPESVAS.

It belongs to the TFII-I family. As to quaternary structure, interacts with the retinoblastoma protein (RB1) via its C-terminus. Widely expressed.

The protein localises to the nucleus. May be a transcription regulator involved in cell-cycle progression and skeletal muscle differentiation. May repress GTF2I transcriptional functions, by preventing its nuclear residency, or by inhibiting its transcriptional activation. May contribute to slow-twitch fiber type specificity during myogenesis and in regenerating muscles. Binds troponin I slow-muscle fiber enhancer (USE B1). Binds specifically and with high affinity to the EFG sequences derived from the early enhancer of HOXC8. This chain is General transcription factor II-I repeat domain-containing protein 1 (Gtf2ird1), found in Mus musculus (Mouse).